A 204-amino-acid chain; its full sequence is Urease accessory protein UreG (204 aa).

Residue 10 to 17 (GPVGAGKT) coordinates GTP.

This sequence belongs to the SIMIBI class G3E GTPase family. UreG subfamily. In terms of assembly, homodimer. UreD, UreF and UreG form a complex that acts as a GTP-hydrolysis-dependent molecular chaperone, activating the urease apoprotein by helping to assemble the nickel containing metallocenter of UreC. The UreE protein probably delivers the nickel.

It localises to the cytoplasm. In terms of biological role, facilitates the functional incorporation of the urease nickel metallocenter. This process requires GTP hydrolysis, probably effectuated by UreG. The sequence is that of Urease accessory protein UreG from Bacillus sp. (strain TB-90).